The primary structure comprises 507 residues: Cytochrome P450 3A28 (507 aa).

Residue Cys-442 coordinates heme.

The protein belongs to the cytochrome P450 family. The cofactor is heme.

The protein resides in the endoplasmic reticulum membrane. The protein localises to the microsome membrane. It carries out the reaction an organic molecule + reduced [NADPH--hemoprotein reductase] + O2 = an alcohol + oxidized [NADPH--hemoprotein reductase] + H2O + H(+). Cytochromes P450 are a group of heme-thiolate monooxygenases. In liver microsomes, this enzyme is involved in an NADPH-dependent electron transport pathway. It oxidizes a variety of structurally unrelated compounds, including steroids, fatty acids, and xenobiotics. This is Cytochrome P450 3A28 (CYP3A28) from Bos taurus (Bovine).